We begin with the raw amino-acid sequence, 274 residues long: Penicillin-insensitive murein endopeptidase (274 aa).

Residues 1 to 19 (MNKTAIALLALLASSASLA) form the signal peptide. 3 disulfide bridges follow: Cys-44–Cys-265, Cys-187–Cys-235, and Cys-216–Cys-223. Positions 110, 113, 120, 147, 150, and 211 each coordinate Zn(2+).

Belongs to the peptidase M74 family. In terms of assembly, dimer. Requires Zn(2+) as cofactor.

Its subcellular location is the periplasm. Its function is as follows. Murein endopeptidase that cleaves the D-alanyl-meso-2,6-diamino-pimelyl amide bond that connects peptidoglycan strands. Likely plays a role in the removal of murein from the sacculus. In Shigella sonnei (strain Ss046), this protein is Penicillin-insensitive murein endopeptidase.